A 108-amino-acid polypeptide reads, in one-letter code: Transcription initiation factor IIA subunit 2 (108 aa).

The protein belongs to the TFIIA subunit 2 family. As to quaternary structure, TFIIA is a heterodimer of the large unprocessed subunit 1 and a small subunit gamma. It was originally believed to be a heterotrimer of an alpha, a beta and a gamma subunit. Interacts with NCOA6 general coactivator. TFIIA forms a complex with TBP.

It is found in the nucleus. TFIIA is a component of the transcription machinery of RNA polymerase II and plays an important role in transcriptional activation. TFIIA in a complex with TBP mediates transcriptional activity. The chain is Transcription initiation factor IIA subunit 2 (gtf2a2) from Oncorhynchus mykiss (Rainbow trout).